Here is a 971-residue protein sequence, read N- to C-terminus: uncharacterized protein (971 aa).

Residues 1–24 (MQSNLLKVLGVLAIVATLVCFIFA) form the signal peptide. Residues 127–146 (RTRPGKSNLDDSGQMIPIPR) are disordered. The next 6 helical transmembrane spans lie at 611–631 (IKAILILYVMTYGAMFLLGFA), 721–741 (LGLSGIIYFIITFIAICIVII), 753–773 (AFMATCILIGIAPLFISFLLF), 795–815 (VVMMAGIIVLTQLFTIYLDFV), 832–852 (FIGTILPIALLNVPIFCINWF), and 865–885 (GVNMQNIVALVIIAYGMYGYV). The disordered stretch occupies residues 933-971 (TGRAKSRLEQRNRTLEHAEQNSKKYKKRIGENTNEETLK). The segment covering 938-954 (SRLEQRNRTLEHAEQNS) has biased composition (basic and acidic residues).

Belongs to the TrbL/VirB6 family.

Its subcellular location is the cell membrane. This is an uncharacterized protein from Rickettsia prowazekii (strain Madrid E).